The following is a 168-amino-acid chain: S-ribosylhomocysteine lyase (168 aa).

Fe cation is bound by residues His-54, His-58, and Cys-128.

This sequence belongs to the LuxS family. Homodimer. The cofactor is Fe cation.

The catalysed reaction is S-(5-deoxy-D-ribos-5-yl)-L-homocysteine = (S)-4,5-dihydroxypentane-2,3-dione + L-homocysteine. In terms of biological role, involved in the synthesis of autoinducer 2 (AI-2) which is secreted by bacteria and is used to communicate both the cell density and the metabolic potential of the environment. The regulation of gene expression in response to changes in cell density is called quorum sensing. Catalyzes the transformation of S-ribosylhomocysteine (RHC) to homocysteine (HC) and 4,5-dihydroxy-2,3-pentadione (DPD). This chain is S-ribosylhomocysteine lyase, found in Neisseria gonorrhoeae (strain ATCC 700825 / FA 1090).